A 497-amino-acid polypeptide reads, in one-letter code: Vacuolar-processing enzyme beta-isozyme 1 (497 aa).

The first 23 residues, 1–23 (MAARCWVWGFVVALLAVAAAADG), serve as a signal peptide directing secretion. N-linked (GlcNAc...) asparagine glycosylation is present at Asn153. His180 is an active-site residue. Cys222 (nucleophile) is an active-site residue. A disulfide bridge connects residues Cys255 and Cys269. The N-linked (GlcNAc...) asparagine glycan is linked to Asn340. Cystine bridges form between Cys432–Cys462 and Cys444–Cys479.

The protein belongs to the peptidase C13 family. In terms of processing, auto-catalytic activation.

It is found in the protein storage vacuole. The catalysed reaction is Hydrolysis of proteins and small molecule substrates at -Asn-|-Xaa- bonds.. Its function is as follows. Asparagine-specific endopeptidase that may be involved in processing of proteins targeted to vacuoles. Cysteine protease required for post-translational proteolysis of seed storage proteins in the protein storage vacuole (PSV) of developing seeds, by processing of proglutelin precursor to mature glutelin subunits, thus contributing to the formation of protein crystalline structures in PSV. This Oryza sativa subsp. indica (Rice) protein is Vacuolar-processing enzyme beta-isozyme 1.